A 121-amino-acid polypeptide reads, in one-letter code: Large ribosomal subunit protein uL14 (121 aa).

This sequence belongs to the universal ribosomal protein uL14 family. In terms of assembly, part of the 50S ribosomal subunit. Forms a cluster with proteins L3 and L19. In the 70S ribosome, L14 and L19 interact and together make contacts with the 16S rRNA in bridges B5 and B8.

Its function is as follows. Binds to 23S rRNA. Forms part of two intersubunit bridges in the 70S ribosome. The polypeptide is Large ribosomal subunit protein uL14 (Synechococcus elongatus (strain ATCC 33912 / PCC 7942 / FACHB-805) (Anacystis nidulans R2)).